A 493-amino-acid chain; its full sequence is CBL-interacting protein kinase 26 (493 aa).

Residues 12 to 266 (YEIGRQLGQG…IPKIKRSAWY (255 aa)) form the Protein kinase domain. ATP contacts are provided by residues 18-26 (LGQGNFAKV) and Lys-41. The active-site Proton acceptor is the Asp-134. Residues 152 to 181 (DFGLSALSESKRHDGLLHTTCGTPAYVAPE) are activation loop. Residues 311–332 (KVYTNGEATTSDSPECSNSDGK) form a disordered region. The segment covering 316–332 (GEATTSDSPECSNSDGK) has biased composition (polar residues). Positions 320-360 (TSDSPECSNSDGKQASLSLPNLNAFDIISLSTGFDLSNLFE) constitute an NAF domain. The segment at 365–394 (RREERFTTRQPAAAIFAKLNELARRFKLKI) is PPI. The segment at 465 to 493 (GQHQQPEQSMQGMQGEQQPSRLPSQQPQG) is disordered.

Belongs to the protein kinase superfamily. CAMK Ser/Thr protein kinase family. SNF1 subfamily. It depends on Mn(2+) as a cofactor.

It carries out the reaction L-seryl-[protein] + ATP = O-phospho-L-seryl-[protein] + ADP + H(+). It catalyses the reaction L-threonyl-[protein] + ATP = O-phospho-L-threonyl-[protein] + ADP + H(+). In terms of biological role, CIPK serine-threonine protein kinases interact with CBL proteins. Binding of a CBL protein to the regulatory NAF domain of CIPK protein lead to the activation of the kinase in a calcium-dependent manner. In Oryza sativa subsp. japonica (Rice), this protein is CBL-interacting protein kinase 26 (CIPK26).